Here is a 513-residue protein sequence, read N- to C-terminus: MTAPWAALALLWGSLCAGSGRGEAETRECIYYNANWELERTNQSGLERCEGEQDKRLHCYASWRNSSGTIELVKKGCWLDDFNCYDRQECVATEENPQVYFCCCEGNFCNERFTHLPEPGGPEVTYEPPPTAPTLLTVLAYSLLPIGGLSLIVLLAFWMYRHRKPPYGHVDIHEDPGPPPPSPLVGLKPLQLLEIKARGRFGCVWKAQLMNDFVAVKIFPLQDKQSWQSEREIFSTPGMKHENLLQFIAAEKRGCSNLEVELWLITAFHDKGSLTDYLKGNIITWNELCHVAETMSRGLSYLHEDVPWCRGEGHKPSIAHRDFKSKNVLLKSDLTAVLADFGLAVRFEPGKPPGDTHGQVGTRRYMAPEVLEGAINFQRDAFLRIDMYAMGLVLWELVSRCKAADGPVDEYMLPFEEEIGQHPSLEELQEVVVHKKMRPTIKDHWLKHPGLAQLCVTIEECWDHDAEARLSAGCVEERVSLIRRSVNSSTSDCLVSLVTSVTNVDLLPKESSI.

The N-terminal stretch at 1–18 is a signal peptide; the sequence is MTAPWAALALLWGSLCAG. Residues 19 to 137 are Extracellular-facing; sequence SGRGEAETRE…PPPTAPTLLT (119 aa). 5 disulfides stabilise this stretch: cysteine 29–cysteine 59, cysteine 49–cysteine 77, cysteine 84–cysteine 103, cysteine 90–cysteine 102, and cysteine 104–cysteine 109. 2 N-linked (GlcNAc...) asparagine glycosylation sites follow: asparagine 42 and asparagine 65. Residues 138-158 form a helical membrane-spanning segment; that stretch reads VLAYSLLPIGGLSLIVLLAFW. The Cytoplasmic portion of the chain corresponds to 159–513; the sequence is MYRHRKPPYG…VDLLPKESSI (355 aa). Positions 190–481 constitute a Protein kinase domain; that stretch reads LQLLEIKARG…AGCVEERVSL (292 aa). Residues 196–204 and lysine 217 contribute to the ATP site; that span reads KARGRFGCV. Aspartate 322 acts as the Proton acceptor in catalysis. The interaction with DYNLT1 stretch occupies residues 492-513; the sequence is DCLVSLVTSVTNVDLLPKESSI.

The protein belongs to the protein kinase superfamily. TKL Ser/Thr protein kinase family. TGFB receptor subfamily. Forms an activin receptor complex with activin type II receptors such as ACVR1B. Interacts with VPS39. Interacts with DYNLT1. Interacts with BMP3. Interacts with BMP2. Requires Mg(2+) as cofactor. It depends on Mn(2+) as a cofactor. Phosphorylated. Constitutive phosphorylation is in part catalyzed by its own kinase activity.

The protein localises to the cell membrane. It carries out the reaction L-threonyl-[receptor-protein] + ATP = O-phospho-L-threonyl-[receptor-protein] + ADP + H(+). The catalysed reaction is L-seryl-[receptor-protein] + ATP = O-phospho-L-seryl-[receptor-protein] + ADP + H(+). In terms of biological role, transmembrane serine/threonine kinase activin type-2 receptor forming an activin receptor complex with activin type-1 serine/threonine kinase receptors (ACVR1, ACVR1B or ACVR1c). Transduces the activin signal from the cell surface to the cytoplasm and is thus regulating many physiological and pathological processes including neuronal differentiation and neuronal survival, hair follicle development and cycling, FSH production by the pituitary gland, wound healing, extracellular matrix production, immunosuppression and carcinogenesis. Activin is also thought to have a paracrine or autocrine role in follicular development in the ovary. Within the receptor complex, the type-2 receptors act as a primary activin receptors (binds activin-A/INHBA, activin-B/INHBB as well as inhibin-A/INHA-INHBA). The type-1 receptors like ACVR1B act as downstream transducers of activin signals. Activin binds to type-2 receptor at the plasma membrane and activates its serine-threonine kinase. The activated receptor type-2 then phosphorylates and activates the type-1 receptor. Once activated, the type-1 receptor binds and phosphorylates the SMAD proteins SMAD2 and SMAD3, on serine residues of the C-terminal tail. Soon after their association with the activin receptor and subsequent phosphorylation, SMAD2 and SMAD3 are released into the cytoplasm where they interact with the common partner SMAD4. This SMAD complex translocates into the nucleus where it mediates activin-induced transcription. Inhibitory SMAD7, which is recruited to ACVR1B through FKBP1A, can prevent the association of SMAD2 and SMAD3 with the activin receptor complex, thereby blocking the activin signal. Activin signal transduction is also antagonized by the binding to the receptor of inhibin-B via the IGSF1 inhibin coreceptor. In Rattus norvegicus (Rat), this protein is Activin receptor type-2B (Acvr2b).